Reading from the N-terminus, the 85-residue chain is U4-theraphotoxin-Hhn1e (85 aa).

A signal peptide spans 1–22; that stretch reads MKVTLIAILTCAAVLVLHTTAA. A propeptide spanning residues 23-48 is cleaved from the precursor; it reads EELEAESQLMEVGMPDTELAAVDEER. 3 disulfides stabilise this stretch: cysteine 52-cysteine 66, cysteine 56-cysteine 77, and cysteine 71-cysteine 82.

This sequence belongs to the neurotoxin 12 (Hwtx-2) family. 02 (Hwtx-2) subfamily. As to expression, expressed by the venom gland.

Its subcellular location is the secreted. Functionally, postsynaptic neurotoxin. In Cyriopagopus hainanus (Chinese bird spider), this protein is U4-theraphotoxin-Hhn1e.